Consider the following 170-residue polypeptide: Shikimate kinase (170 aa).

15-20 serves as a coordination point for ATP; the sequence is GAGKTT. Residue T19 participates in Mg(2+) binding. D37, R61, and G83 together coordinate substrate. R121 contacts ATP. Residue R140 participates in substrate binding.

Belongs to the shikimate kinase family. As to quaternary structure, monomer. Requires Mg(2+) as cofactor.

It is found in the cytoplasm. It carries out the reaction shikimate + ATP = 3-phosphoshikimate + ADP + H(+). It participates in metabolic intermediate biosynthesis; chorismate biosynthesis; chorismate from D-erythrose 4-phosphate and phosphoenolpyruvate: step 5/7. Catalyzes the specific phosphorylation of the 3-hydroxyl group of shikimic acid using ATP as a cosubstrate. This chain is Shikimate kinase, found in Neisseria meningitidis serogroup C (strain 053442).